Here is a 661-residue protein sequence, read N- to C-terminus: UvrABC system protein B (661 aa).

The 154-residue stretch at glutamate 25–methionine 178 folds into the Helicase ATP-binding domain. Position 38 to 45 (glycine 38 to threonine 45) interacts with ATP. The Beta-hairpin signature appears at tyrosine 91–isoleucine 114. Residues glutamine 429–isoleucine 591 enclose the Helicase C-terminal domain. Residues glutamate 625–leucine 660 enclose the UVR domain.

It belongs to the UvrB family. In terms of assembly, forms a heterotetramer with UvrA during the search for lesions. Interacts with UvrC in an incision complex.

It localises to the cytoplasm. The UvrABC repair system catalyzes the recognition and processing of DNA lesions. A damage recognition complex composed of 2 UvrA and 2 UvrB subunits scans DNA for abnormalities. Upon binding of the UvrA(2)B(2) complex to a putative damaged site, the DNA wraps around one UvrB monomer. DNA wrap is dependent on ATP binding by UvrB and probably causes local melting of the DNA helix, facilitating insertion of UvrB beta-hairpin between the DNA strands. Then UvrB probes one DNA strand for the presence of a lesion. If a lesion is found the UvrA subunits dissociate and the UvrB-DNA preincision complex is formed. This complex is subsequently bound by UvrC and the second UvrB is released. If no lesion is found, the DNA wraps around the other UvrB subunit that will check the other stand for damage. The sequence is that of UvrABC system protein B from Caldicellulosiruptor saccharolyticus (strain ATCC 43494 / DSM 8903 / Tp8T 6331).